The chain runs to 507 residues: 2,3-bisphosphoglycerate-independent phosphoglycerate mutase (507 aa).

Mn(2+) is bound by residues aspartate 13 and serine 63. Catalysis depends on serine 63, which acts as the Phosphoserine intermediate. Substrate-binding positions include histidine 122, 152 to 153, arginine 184, arginine 190, 256 to 259, and lysine 330; these read RD and RADR. Positions 397, 401, 438, 439, and 457 each coordinate Mn(2+).

The protein belongs to the BPG-independent phosphoglycerate mutase family. In terms of assembly, monomer. The cofactor is Mn(2+).

It carries out the reaction (2R)-2-phosphoglycerate = (2R)-3-phosphoglycerate. It participates in carbohydrate degradation; glycolysis; pyruvate from D-glyceraldehyde 3-phosphate: step 3/5. Catalyzes the interconversion of 2-phosphoglycerate and 3-phosphoglycerate. The polypeptide is 2,3-bisphosphoglycerate-independent phosphoglycerate mutase (Chromobacterium violaceum (strain ATCC 12472 / DSM 30191 / JCM 1249 / CCUG 213 / NBRC 12614 / NCIMB 9131 / NCTC 9757 / MK)).